The sequence spans 252 residues: Outer kinetochore KNL1 complex subunit ZWINT (252 aa).

The disordered stretch occupies residues 80–99 (QSPDALASEDASRQKATETK). Basic and acidic residues predominate over residues 89–99 (DASRQKATETK). The stretch at 120 to 221 (LSEALPQVKE…QRNQSYLQLL (102 aa)) forms a coiled coil. Phosphoserine is present on residues S216 and S249.

As to quaternary structure, component of the KNL1 complex composed of KNL1 and ZWINT. Part of the ten-subunit outer kinetochore KMN network that includes the KNL1, MIS12 and NDC80 complexes; a bioriented kinetochore contains approximately 150 copies of the network. Interacts with the MIS12 complex subunits MIS12 DSN1, and PMF1. Interacts with the NDC80 complex subunit NDC80 during mitosis. Interacts with ZW10. Interacts with CETN3.

It localises to the nucleus. The protein localises to the chromosome. It is found in the centromere. Its subcellular location is the kinetochore. Functionally, acts as a component of the outer kinetochore KNL1 complex that serves as a docking point for spindle assembly checkpoint components and mediates microtubule-kinetochore interactions. Kinetochores, consisting of a centromere-associated inner segment and a microtubule-contacting outer segment, play a crucial role in chromosome segregation by mediating the physical connection between centromeric DNA and spindle microtubules. The outer kinetochore is made up of the ten-subunit KMN network, comprising the MIS12, NDC80 and KNL1 complexes, and auxiliary microtubule-associated components; together they connect the outer kinetochore with the inner kinetochore, bind microtubules, and mediate interactions with mitotic checkpoint proteins that delay anaphase until chromosomes are bioriented on the spindle. Targets the RZZ complex to the kinetochore at prometaphase. Recruits MAD2L1 to the kinetochore, but is not required for BUB1B localization. In addition to orienting mitotic chromosomes, it is also essential for alignment of homologous chromosomes during meiotic metaphase I. In meiosis I, required to activate the spindle assembly checkpoint at unattached kinetochores to correct erroneous kinetochore-microtubule attachments. The polypeptide is Outer kinetochore KNL1 complex subunit ZWINT (Zwint) (Mus musculus (Mouse)).